The primary structure comprises 158 residues: Large ribosomal subunit protein uL11 (158 aa).

Belongs to the universal ribosomal protein uL11 family. In terms of assembly, part of the ribosomal stalk of the 50S ribosomal subunit. Interacts with L10 and the large rRNA to form the base of the stalk. L10 forms an elongated spine to which L12 dimers bind in a sequential fashion forming a multimeric L10(L12)X complex.

Forms part of the ribosomal stalk which helps the ribosome interact with GTP-bound translation factors. This Methanospirillum hungatei JF-1 (strain ATCC 27890 / DSM 864 / NBRC 100397 / JF-1) protein is Large ribosomal subunit protein uL11.